We begin with the raw amino-acid sequence, 341 residues long: Geranylgeranyl transferase type-2 subunit beta (341 aa).

PFTB repeat units lie at residues 15–55, 62–104, 122–163, 170–211, 223–264, and 271–313; these read KSKH…ITMN, QQDV…KIYD, RERL…SLLN, ADTA…AIMN, VKLI…SILK, and LKIL…SLID. Residues 196–198 and 243–255 contribute to the geranylgeranyl diphosphate site; these read HAA and RPEKLPDVCYSWW. Zn(2+)-binding residues include Asp-249, Cys-251, and His-301.

The protein belongs to the protein prenyltransferase subunit beta family. Heterodimer of an alpha and a beta subunit. It depends on Zn(2+) as a cofactor.

The enzyme catalyses geranylgeranyl diphosphate + L-cysteinyl-[protein] = S-geranylgeranyl-L-cysteinyl-[protein] + diphosphate. In terms of biological role, catalyzes the transfer of a geranyl-geranyl moiety from geranyl-geranyl pyrophosphate to proteins having the C-terminal -XCC or -XCXC, where both cysteines may become modified. Acts on YPT1 and SEC4. The sequence is that of Geranylgeranyl transferase type-2 subunit beta (BET2) from Candida albicans (Yeast).